A 107-amino-acid chain; its full sequence is Iron-sulfur cluster assembly protein CyaY (107 aa).

Belongs to the frataxin family.

Functionally, involved in iron-sulfur (Fe-S) cluster assembly. May act as a regulator of Fe-S biogenesis. This is Iron-sulfur cluster assembly protein CyaY from Edwardsiella ictaluri (strain 93-146).